We begin with the raw amino-acid sequence, 180 residues long: Ribulose bisphosphate carboxylase small subunit, chloroplastic (180 aa).

Residues 1 to 57 (MVSSMMVSSAATFTRASPAQSSMVAPFTGLKSASAFPVTRKPNADLSHLPSNGGRVQ) constitute a chloroplast transit peptide.

Belongs to the RuBisCO small chain family. As to quaternary structure, heterohexadecamer of 8 large and 8 small subunits.

The protein resides in the plastid. The protein localises to the chloroplast. Its function is as follows. RuBisCO catalyzes two reactions: the carboxylation of D-ribulose 1,5-bisphosphate, the primary event in carbon dioxide fixation, as well as the oxidative fragmentation of the pentose substrate. Both reactions occur simultaneously and in competition at the same active site. Although the small subunit is not catalytic it is essential for maximal activity. In Musa acuminata (Banana), this protein is Ribulose bisphosphate carboxylase small subunit, chloroplastic.